The sequence spans 726 residues: Catalase-peroxidase (726 aa).

A disordered region spans residues 1-33 (MSTSDDIHNTTATGKCPFHQGGHDQSAGAGTTT). The tryptophyl-tyrosyl-methioninium (Trp-Tyr) (with M-252) cross-link spans 105–226 (WHGAGTYRSI…LGATEMGLIY (122 aa)). The active-site Proton acceptor is the H106. The tryptophyl-tyrosyl-methioninium (Tyr-Met) (with W-105) cross-link spans 226–252 (YVNPEGPDHSGEPLSAAAAIRATFGNM). A heme b-binding site is contributed by H267.

This sequence belongs to the peroxidase family. Peroxidase/catalase subfamily. Homodimer or homotetramer. Heme b serves as cofactor. Formation of the three residue Trp-Tyr-Met cross-link is important for the catalase, but not the peroxidase activity of the enzyme.

It carries out the reaction H2O2 + AH2 = A + 2 H2O. The catalysed reaction is 2 H2O2 = O2 + 2 H2O. Its function is as follows. Bifunctional enzyme with both catalase and broad-spectrum peroxidase activity. The sequence is that of Catalase-peroxidase from Escherichia coli (strain K12 / DH10B).